Here is a 430-residue protein sequence, read N- to C-terminus: MKQAFRVALGFLILWASVLHAEVRIEITQGVDSARPIGVVPFKWAGPGTPPEDIGKIVGADLRNSGKFNPIDVARMPQQPTTASEVTPAAWTALGIDAVVVGQVQPGADGGYLISYQLVDTSGSPGTVLAQNQYKVTKQWLRYSAHTASDEVFEKLTGIKGAFRTRIAYVVQTNGGKFPYELRVADYDGYNQFTVHRSPEPLMSPAWSPDGSKLAYVTFESGRSALVVQTLANGAIRQIASFPRHNGAPAFSPDGSRLAFALSKSGSLNLYVMNLGSGQITQITDGRSNNTEPTWFPDGQSLAYTSDQGGRPQIYKVSASGGASQRLTWEGSQNQDSEVSSDGKFLVMVSSNSGAQHIAKQDLGSGAVQVLTGTFLDETPSIAPNGTMVIYSSTQGMGSVLQLVSTDGRFKARLPATDGQVKFPAWSPYL.

The signal sequence occupies residues 1 to 21; that stretch reads MKQAFRVALGFLILWASVLHA.

Belongs to the TolB family. In terms of assembly, the Tol-Pal system is composed of five core proteins: the inner membrane proteins TolA, TolQ and TolR, the periplasmic protein TolB and the outer membrane protein Pal. They form a network linking the inner and outer membranes and the peptidoglycan layer.

Its subcellular location is the periplasm. In terms of biological role, part of the Tol-Pal system, which plays a role in outer membrane invagination during cell division and is important for maintaining outer membrane integrity. TolB occupies a key intermediary position in the Tol-Pal system because it communicates directly with both membrane-embedded components, Pal in the outer membrane and TolA in the inner membrane. In Serratia proteamaculans (strain 568), this protein is Tol-Pal system protein TolB.